The primary structure comprises 223 residues: DNA mismatch repair protein MutH (223 aa).

The protein belongs to the MutH family.

The protein localises to the cytoplasm. Functionally, sequence-specific endonuclease that cleaves unmethylated GATC sequences. It is involved in DNA mismatch repair. In Shewanella sp. (strain W3-18-1), this protein is DNA mismatch repair protein MutH.